The primary structure comprises 127 residues: MSIPADLLYTDTHEWVRIEGDEAVIGITQFAQEQLGDLTFVDLPAVGDTLATGQEMGSVESVKAASELYSPLAGTVSAVNDALSGAPELVNQSPYTDGWMVRVKLSATPEGLLSAADYEAVVAREAH.

The Lipoyl-binding domain maps to 22–104 (EAVIGITQFA…YTDGWMVRVK (83 aa)). The residue at position 63 (Lys-63) is an N6-lipoyllysine.

This sequence belongs to the GcvH family. As to quaternary structure, the glycine cleavage system is composed of four proteins: P, T, L and H. (R)-lipoate is required as a cofactor.

Functionally, the glycine cleavage system catalyzes the degradation of glycine. The H protein shuttles the methylamine group of glycine from the P protein to the T protein. The sequence is that of Glycine cleavage system H protein from Nitratidesulfovibrio vulgaris (strain DSM 19637 / Miyazaki F) (Desulfovibrio vulgaris).